The primary structure comprises 341 residues: Serpentine receptor class beta-1 (341 aa).

The next 7 membrane-spanning stretches (helical) occupy residues 22–42 (AQFW…IFLL), 66–86 (FLFA…PLFI), 102–122 (GQLS…GFSI), 141–161 (LGPL…FTVF), 188–208 (CWIL…ILLV), 240–260 (LIVS…TIFI), and 279–299 (GVYI…IKAL).

Belongs to the nematode receptor-like protein srb family.

It localises to the membrane. The chain is Serpentine receptor class beta-1 (srb-1) from Caenorhabditis elegans.